A 152-amino-acid polypeptide reads, in one-letter code: MSRLPVLLLLQLLVRPGLQAPMTQTTSLKTSWVNCSNMIDEIITHLKQPPLPLLDFNNLNGEDQDILMENNLRRPNLEAFNRAVKSLQNASAIESILKNLLPCLPLATAAPTRHPIRIKDGDWNEFRRKLTFYLKTLENAQAQQTTLSLAIF.

Positions methionine 1–glutamine 19 are cleaved as a signal peptide. Residues asparagine 34 and asparagine 89 are each glycosylated (N-linked (GlcNAc...) asparagine). Cysteine 35 and cysteine 103 are oxidised to a cystine.

Belongs to the IL-3 family. In terms of assembly, monomer. In terms of tissue distribution, activated T-cells, mast cells, natural killer cells.

The protein localises to the secreted. Granulocyte/macrophage colony-stimulating factors are cytokines that act in hematopoiesis by controlling the production, differentiation, and function of 2 related white cell populations of the blood, the granulocytes and the monocytes-macrophages. In terms of biological role, this CSF induces granulocytes, macrophages, mast cells, stem cells, erythroid cells, eosinophils and megakaryocytes. This is Interleukin-3 (IL3) from Pan troglodytes (Chimpanzee).